Here is a 183-residue protein sequence, read N- to C-terminus: UPF0302 protein BH1670 (183 aa).

Belongs to the UPF0302 family.

This Halalkalibacterium halodurans (strain ATCC BAA-125 / DSM 18197 / FERM 7344 / JCM 9153 / C-125) (Bacillus halodurans) protein is UPF0302 protein BH1670.